A 120-amino-acid chain; its full sequence is Transcription elongation factor 1 homolog (120 aa).

4 residues coordinate Zn(2+): Cys25, Cys28, Cys49, and Cys52. Residues 84–110 (EDDVVQEEEEEVEEEEEEEEEEDDEDD) show a composition bias toward acidic residues. The tract at residues 84 to 120 (EDDVVQEEEEEVEEEEEEEEEEDDEDDHVSVKRKYNF) is disordered.

It belongs to the ELOF1 family.

Its subcellular location is the nucleus. In terms of biological role, transcription elongation factor implicated in the maintenance of proper chromatin structure in actively transcribed regions. In Arabidopsis thaliana (Mouse-ear cress), this protein is Transcription elongation factor 1 homolog.